Reading from the N-terminus, the 116-residue chain is uncharacterized protein (116 aa).

The N-terminal stretch at 1-15 is a signal peptide; the sequence is MKKYFLILASFMLVA.

This is an uncharacterized protein from Haemophilus influenzae (strain ATCC 51907 / DSM 11121 / KW20 / Rd).